We begin with the raw amino-acid sequence, 301 residues long: Lysozyme-like protein 3 (301 aa).

The N-terminal stretch at 1 to 15 is a signal peptide; the sequence is MKLFALLVSITLCYS. The 219-residue stretch at 64–282 folds into the Ch-type lysozyme domain; it reads HAYSVDISFH…HLSQIVHFST (219 aa).

This sequence belongs to the glycosyl hydrolase 25 family.

In terms of biological role, plays a role in the stress response to heavy metals such as copper, probably in a kgb-1-dependent manner. The protein is Lysozyme-like protein 3 of Caenorhabditis elegans.